A 428-amino-acid polypeptide reads, in one-letter code: D-amino acid dehydrogenase (428 aa).

3–17 (VVVLGSGVVGVTSAY) provides a ligand contact to FAD.

It belongs to the DadA oxidoreductase family. The cofactor is FAD.

The enzyme catalyses a D-alpha-amino acid + A + H2O = a 2-oxocarboxylate + AH2 + NH4(+). It participates in amino-acid degradation; D-alanine degradation; NH(3) and pyruvate from D-alanine: step 1/1. Functionally, oxidative deamination of D-amino acids. In Paraburkholderia phymatum (strain DSM 17167 / CIP 108236 / LMG 21445 / STM815) (Burkholderia phymatum), this protein is D-amino acid dehydrogenase.